Here is a 132-residue protein sequence, read N- to C-terminus: Large ribosomal subunit protein bL19 (132 aa).

This sequence belongs to the bacterial ribosomal protein bL19 family.

In terms of biological role, this protein is located at the 30S-50S ribosomal subunit interface and may play a role in the structure and function of the aminoacyl-tRNA binding site. This is Large ribosomal subunit protein bL19 from Persephonella marina (strain DSM 14350 / EX-H1).